The primary structure comprises 484 residues: UDP-N-acetylmuramate--L-alanine ligase (484 aa).

122–128 (GTHGKTT) contributes to the ATP binding site.

The protein belongs to the MurCDEF family.

Its subcellular location is the cytoplasm. The catalysed reaction is UDP-N-acetyl-alpha-D-muramate + L-alanine + ATP = UDP-N-acetyl-alpha-D-muramoyl-L-alanine + ADP + phosphate + H(+). It functions in the pathway cell wall biogenesis; peptidoglycan biosynthesis. In terms of biological role, cell wall formation. The polypeptide is UDP-N-acetylmuramate--L-alanine ligase (Mycobacterium sp. (strain JLS)).